Reading from the N-terminus, the 89-residue chain is MALSVEEKAQIVTDFQQAAGDTGSPEVQVALLTANINKLQGHFKANGKDHHSRRGLIRMVNQRRKLLDYLKGKDTTRYSALIGRLGLRR.

Belongs to the universal ribosomal protein uS15 family. In terms of assembly, part of the 30S ribosomal subunit. Forms a bridge to the 50S subunit in the 70S ribosome, contacting the 23S rRNA.

Its function is as follows. One of the primary rRNA binding proteins, it binds directly to 16S rRNA where it helps nucleate assembly of the platform of the 30S subunit by binding and bridging several RNA helices of the 16S rRNA. Functionally, forms an intersubunit bridge (bridge B4) with the 23S rRNA of the 50S subunit in the ribosome. The sequence is that of Small ribosomal subunit protein uS15 from Pseudomonas putida (strain GB-1).